We begin with the raw amino-acid sequence, 212 residues long: Large ribosomal subunit protein uL3 (212 aa).

An N5-methylglutamine modification is found at Q153.

The protein belongs to the universal ribosomal protein uL3 family. As to quaternary structure, part of the 50S ribosomal subunit. Forms a cluster with proteins L14 and L19. Methylated by PrmB.

One of the primary rRNA binding proteins, it binds directly near the 3'-end of the 23S rRNA, where it nucleates assembly of the 50S subunit. The chain is Large ribosomal subunit protein uL3 from Idiomarina loihiensis (strain ATCC BAA-735 / DSM 15497 / L2-TR).